Here is a 207-residue protein sequence, read N- to C-terminus: LPS-assembly lipoprotein LptE (207 aa).

The N-terminal stretch at 1 to 19 (MRHRILTLLLGLAVLVTAG) is a signal peptide. Cys20 carries the N-palmitoyl cysteine lipid modification. The S-diacylglycerol cysteine moiety is linked to residue Cys20. Residues 168-207 (KNTQKNGDKPVSDANAAQGSTPTAVNETTLGEPAVSTSAK) form a disordered region. Residues 182–207 (NAAQGSTPTAVNETTLGEPAVSTSAK) are compositionally biased toward polar residues.

This sequence belongs to the LptE lipoprotein family. In terms of assembly, component of the lipopolysaccharide transport and assembly complex. Interacts with LptD.

It is found in the cell outer membrane. Its function is as follows. Together with LptD, is involved in the assembly of lipopolysaccharide (LPS) at the surface of the outer membrane. Required for the proper assembly of LptD. Binds LPS and may serve as the LPS recognition site at the outer membrane. This chain is LPS-assembly lipoprotein LptE, found in Yersinia pseudotuberculosis serotype O:1b (strain IP 31758).